The chain runs to 341 residues: Dihydroorotate dehydrogenase (quinone) (341 aa).

Residues 62–66 (AGMDK) and threonine 86 contribute to the FMN site. Substrate is bound at residue lysine 66. 111–115 (NRMGF) is a substrate binding site. FMN contacts are provided by asparagine 139 and asparagine 172. Position 172 (asparagine 172) interacts with substrate. Serine 175 (nucleophile) is an active-site residue. Residue asparagine 177 coordinates substrate. FMN is bound by residues lysine 217 and threonine 245. 246-247 (NT) provides a ligand contact to substrate. Residues glycine 268, glycine 297, and 318–319 (YS) each bind FMN.

The protein belongs to the dihydroorotate dehydrogenase family. Type 2 subfamily. In terms of assembly, monomer. FMN serves as cofactor.

It localises to the cell membrane. The catalysed reaction is (S)-dihydroorotate + a quinone = orotate + a quinol. It participates in pyrimidine metabolism; UMP biosynthesis via de novo pathway; orotate from (S)-dihydroorotate (quinone route): step 1/1. Catalyzes the conversion of dihydroorotate to orotate with quinone as electron acceptor. The sequence is that of Dihydroorotate dehydrogenase (quinone) from Shewanella loihica (strain ATCC BAA-1088 / PV-4).